Reading from the N-terminus, the 211-residue chain is uncharacterized protein (211 aa).

An N-terminal signal peptide occupies residues 1-27 (MKRTSAALVVFLILLFLGLLFLPMFIV).

This is an uncharacterized protein from Archaeoglobus fulgidus (strain ATCC 49558 / DSM 4304 / JCM 9628 / NBRC 100126 / VC-16).